Reading from the N-terminus, the 269-residue chain is Surfeit locus protein 4 (269 aa).

Transmembrane regions (helical) follow at residues 64–84, 92–112, 179–199, 203–223, and 242–262; these read FLAT…CVLI, YACF…SILW, FFSI…AIGF, LAAL…NAFW, and TTSV…GVSM. Positions 266 to 269 match the Di-lysine motif motif; that stretch reads KKEW.

The protein belongs to the SURF4 family.

It localises to the endoplasmic reticulum membrane. It is found in the endoplasmic reticulum-Golgi intermediate compartment membrane. The protein localises to the golgi apparatus membrane. Its function is as follows. Endoplasmic reticulum cargo receptor that mediates the export of lipoproteins by recruiting cargos into COPII vesicles to facilitate their secretion. Acts as a cargo receptor for lipoproteins bearing both APOB and APOA1, thereby regulating lipoprotein delivery and the maintenance of lipid homeostasis. In Takifugu rubripes (Japanese pufferfish), this protein is Surfeit locus protein 4.